Consider the following 732-residue polypeptide: Beta-galactosidase 5 (732 aa).

The N-terminal stretch at M1–S23 is a signal peptide. E187 serves as the catalytic Proton donor. E256 acts as the Nucleophile in catalysis. The N-linked (GlcNAc...) asparagine glycan is linked to N466.

This sequence belongs to the glycosyl hydrolase 35 family. As to expression, expressed in leaves and flowers.

Its subcellular location is the secreted. The protein resides in the extracellular space. It is found in the apoplast. The enzyme catalyses Hydrolysis of terminal non-reducing beta-D-galactose residues in beta-D-galactosides.. The protein is Beta-galactosidase 5 (BGAL5) of Arabidopsis thaliana (Mouse-ear cress).